Reading from the N-terminus, the 425-residue chain is Kynurenine/alpha-aminoadipate aminotransferase, mitochondrial (425 aa).

The transit peptide at 1–29 (MNYSRFLTATSLARKPSPIRTTADILSKA) directs the protein to the mitochondrion. Arginine 20 serves as a coordination point for substrate. A Phosphoserine modification is found at serine 40. Lysine 69 carries the N6-acetyllysine modification. A substrate-binding site is contributed by tyrosine 74. Lysine 172 carries the post-translational modification N6-succinyllysine. Position 179 is an N6-acetyllysine (lysine 179). Asparagine 202 lines the substrate pocket. Lysine 263 carries the N6-(pyridoxal phosphate)lysine; alternate modification. N6-acetyllysine; alternate occurs at positions 263 and 339. N6-succinyllysine; alternate occurs at positions 263 and 339. Lysine 351 carries the post-translational modification N6-acetyllysine. The residue at position 367 (lysine 367) is an N6-acetyllysine; alternate. N6-succinyllysine; alternate is present on lysine 367. Arginine 399 is a binding site for substrate. N6-acetyllysine is present on lysine 422.

This sequence belongs to the class-I pyridoxal-phosphate-dependent aminotransferase family. Homodimer. Pyridoxal 5'-phosphate serves as cofactor. Expressed mainly in kidney and to a lesser amount in liver and brain.

Its subcellular location is the mitochondrion. It catalyses the reaction L-kynurenine + 2-oxoglutarate = kynurenate + L-glutamate + H2O. The enzyme catalyses L-2-aminoadipate + 2-oxoglutarate = 2-oxoadipate + L-glutamate. The catalysed reaction is glycine + 2-oxoglutarate = glyoxylate + L-glutamate. It carries out the reaction L-kynurenine + glyoxylate = kynurenate + glycine + H2O. It catalyses the reaction 3-hydroxy-L-kynurenine + glyoxylate = xanthurenate + glycine + H2O. The enzyme catalyses 2-oxohexanoate + L-kynurenine = L-2-aminohexanoate + kynurenate + H2O. The catalysed reaction is 3-phenylpyruvate + L-kynurenine = kynurenate + L-phenylalanine + H2O. It carries out the reaction 4-methylsulfanyl-2-oxobutanoate + L-kynurenine = kynurenate + L-methionine + H2O. It catalyses the reaction 2-oxo-3-sulfanylpropanoate + L-kynurenine = kynurenate + L-cysteine + H2O. The enzyme catalyses indole-3-pyruvate + L-kynurenine = kynurenate + L-tryptophan + H2O. The catalysed reaction is 2-oxopentanoate + L-kynurenine = L-2-aminopentanoate + kynurenate + H2O. It carries out the reaction 4-methyl-2-oxopentanoate + L-kynurenine = kynurenate + L-leucine + H2O. It catalyses the reaction glyoxylate + L-methionine = 4-methylsulfanyl-2-oxobutanoate + glycine. The enzyme catalyses L-2-aminoadipate + glyoxylate = 2-oxoadipate + glycine. The catalysed reaction is L-tyrosine + glyoxylate = 3-(4-hydroxyphenyl)pyruvate + glycine. It carries out the reaction glyoxylate + L-phenylalanine = 3-phenylpyruvate + glycine. It catalyses the reaction L-tryptophan + glyoxylate = indole-3-pyruvate + glycine. The enzyme catalyses L-leucine + glyoxylate = 4-methyl-2-oxopentanoate + glycine. The catalysed reaction is 2-oxobutanoate + L-kynurenine = (2S)-2-aminobutanoate + kynurenate + H2O. It carries out the reaction 2-oxoadipate + L-kynurenine = L-2-aminoadipate + kynurenate + H2O. It functions in the pathway amino-acid degradation; L-lysine degradation via saccharopine pathway; glutaryl-CoA from L-lysine: step 4/6. Its function is as follows. Transaminase with broad substrate specificity. Has transaminase activity towards aminoadipate, kynurenine, methionine and glutamate. Shows activity also towards tryptophan, aspartate and hydroxykynurenine. Accepts a variety of oxo-acids as amino-group acceptors, with a preference for 2-oxoglutarate, 2-oxocaproic acid, phenylpyruvate and alpha-oxo-gamma-methiol butyric acid. Can also use glyoxylate as amino-group acceptor (in vitro). The polypeptide is Kynurenine/alpha-aminoadipate aminotransferase, mitochondrial (Mus musculus (Mouse)).